We begin with the raw amino-acid sequence, 57 residues long: MPAIQPPLYPTFLLLILLSLIVTLYVWIISTITYKTVVRHAALYQRSFFRWSFDHSL.

Over 1–8 (MPAIQPPL) the chain is Virion surface. A helical transmembrane segment spans residues 9–29 (YPTFLLLILLSLIVTLYVWII). The Intravirion portion of the chain corresponds to 30-57 (STITYKTVVRHAALYQRSFFRWSFDHSL).

The protein belongs to the rubulavirus small hydrophobic protein family. As to quaternary structure, interacts with host TNFRSF1A, RIPK1 and IRAK1; these interactions interfere with host NF-kappa-B activation at the level of receptor complexes. Interacts with host protein UBQLN4.

It is found in the virion membrane. The protein resides in the host cell membrane. Its function is as follows. Plays a role in the inhibition of the host NF-kappa-B pathway. This inhibition occurs at the receptor level, by preventing the signaling of TNFR1 as well as IL-1R and TLR3. This is Small hydrophobic protein (SH) from Mumps virus genotype B (strain Urabe vaccine AM9) (MuV).